We begin with the raw amino-acid sequence, 283 residues long: Shikimate dehydrogenase (NADP(+)) (283 aa).

Shikimate is bound by residues 16–18 (SLS) and Thr-63. The active-site Proton acceptor is the Lys-67. Position 79 (Asp-79) interacts with NADP(+). Residues Asn-88 and Asp-103 each contribute to the shikimate site. NADP(+) is bound by residues 128 to 132 (GAGGA), Ala-223, and Gly-243.

It belongs to the shikimate dehydrogenase family. As to quaternary structure, homodimer.

The enzyme catalyses shikimate + NADP(+) = 3-dehydroshikimate + NADPH + H(+). The protein operates within metabolic intermediate biosynthesis; chorismate biosynthesis; chorismate from D-erythrose 4-phosphate and phosphoenolpyruvate: step 4/7. Functionally, involved in the biosynthesis of the chorismate, which leads to the biosynthesis of aromatic amino acids. Catalyzes the reversible NADPH linked reduction of 3-dehydroshikimate (DHSA) to yield shikimate (SA). This chain is Shikimate dehydrogenase (NADP(+)), found in Xanthomonas campestris pv. campestris (strain B100).